A 118-amino-acid chain; its full sequence is Beta-2-microglobulin (118 aa).

An N-terminal signal peptide occupies residues Met1 to Ala20. The region spanning Pro25–Val112 is the Ig-like C1-type domain. An intrachain disulfide couples Cys45 to Cys99.

This sequence belongs to the beta-2-microglobulin family. Heterodimer of an alpha chain and a beta chain. Beta-2-microglobulin is the beta-chain of major histocompatibility complex class I molecules.

The protein localises to the secreted. Its function is as follows. Component of the class I major histocompatibility complex (MHC). Involved in the presentation of peptide antigens to the immune system. This chain is Beta-2-microglobulin (B2M), found in Sus scrofa (Pig).